The sequence spans 517 residues: Bifunctional purine biosynthesis protein PurH (517 aa).

Residues 1 to 145 (MSPLALVSVS…KNHKYVSVLV (145 aa)) enclose the MGS-like domain.

The protein belongs to the PurH family.

The catalysed reaction is (6R)-10-formyltetrahydrofolate + 5-amino-1-(5-phospho-beta-D-ribosyl)imidazole-4-carboxamide = 5-formamido-1-(5-phospho-D-ribosyl)imidazole-4-carboxamide + (6S)-5,6,7,8-tetrahydrofolate. It carries out the reaction IMP + H2O = 5-formamido-1-(5-phospho-D-ribosyl)imidazole-4-carboxamide. It participates in purine metabolism; IMP biosynthesis via de novo pathway; 5-formamido-1-(5-phospho-D-ribosyl)imidazole-4-carboxamide from 5-amino-1-(5-phospho-D-ribosyl)imidazole-4-carboxamide (10-formyl THF route): step 1/1. It functions in the pathway purine metabolism; IMP biosynthesis via de novo pathway; IMP from 5-formamido-1-(5-phospho-D-ribosyl)imidazole-4-carboxamide: step 1/1. The chain is Bifunctional purine biosynthesis protein PurH from Prochlorococcus marinus (strain MIT 9215).